The chain runs to 354 residues: UDP-N-acetylglucosamine--N-acetylmuramyl-(pentapeptide) pyrophosphoryl-undecaprenol N-acetylglucosamine transferase (354 aa).

Residues 11–13, arginine 164, serine 194, and glutamine 289 contribute to the UDP-N-acetyl-alpha-D-glucosamine site; that span reads TAG.

Belongs to the glycosyltransferase 28 family. MurG subfamily.

It localises to the cell membrane. It catalyses the reaction di-trans,octa-cis-undecaprenyl diphospho-N-acetyl-alpha-D-muramoyl-L-alanyl-D-glutamyl-meso-2,6-diaminopimeloyl-D-alanyl-D-alanine + UDP-N-acetyl-alpha-D-glucosamine = di-trans,octa-cis-undecaprenyl diphospho-[N-acetyl-alpha-D-glucosaminyl-(1-&gt;4)]-N-acetyl-alpha-D-muramoyl-L-alanyl-D-glutamyl-meso-2,6-diaminopimeloyl-D-alanyl-D-alanine + UDP + H(+). It functions in the pathway cell wall biogenesis; peptidoglycan biosynthesis. Functionally, cell wall formation. Catalyzes the transfer of a GlcNAc subunit on undecaprenyl-pyrophosphoryl-MurNAc-pentapeptide (lipid intermediate I) to form undecaprenyl-pyrophosphoryl-MurNAc-(pentapeptide)GlcNAc (lipid intermediate II). The sequence is that of UDP-N-acetylglucosamine--N-acetylmuramyl-(pentapeptide) pyrophosphoryl-undecaprenol N-acetylglucosamine transferase from Lachnospira eligens (strain ATCC 27750 / DSM 3376 / VPI C15-48 / C15-B4) (Eubacterium eligens).